A 616-amino-acid polypeptide reads, in one-letter code: Chaperone protein HscA (616 aa).

The protein belongs to the heat shock protein 70 family.

Chaperone involved in the maturation of iron-sulfur cluster-containing proteins. Has a low intrinsic ATPase activity which is markedly stimulated by HscB. Involved in the maturation of IscU. This is Chaperone protein HscA from Pectobacterium atrosepticum (strain SCRI 1043 / ATCC BAA-672) (Erwinia carotovora subsp. atroseptica).